The primary structure comprises 131 residues: Small ribosomal subunit protein uS8 (131 aa).

The protein belongs to the universal ribosomal protein uS8 family. As to quaternary structure, part of the 30S ribosomal subunit. Contacts proteins S5 and S12.

One of the primary rRNA binding proteins, it binds directly to 16S rRNA central domain where it helps coordinate assembly of the platform of the 30S subunit. In Methylococcus capsulatus (strain ATCC 33009 / NCIMB 11132 / Bath), this protein is Small ribosomal subunit protein uS8.